The sequence spans 1332 residues: MAERANLVFHNKVIGGTAIKRIISRLIDHFGMAYTSHILDQVKTLGFRQATTTSISLGIDDLLTIPSKGWLVQDAEQQSLILEKHHHYGNVHAVEKLRQSIEIWYATSEYLRQEMNPNFSMTDPFNPVHIMSFSGARGNASQVHQLVGMRGLMSDPQGQMIDLPIQSNLREGLSLTEYIISCYGARKGVVDTAVRTSDAGYLTRRLVEVVQHIVVRRTDCGTVRGISVNTRNRMMSERILIQTLIGRVLADDIYIGSRCIVVRNQDIGIGLINRFINFQTQPIFIRTPFTCRNTSWICRLCYGRSPIHGNLVELGEAVGIIAGQSIGEPGTQLTLRTFHTGGVFTGGTAEYVRSPSNGKIKFNENSAYPTRTRHGHPAFLCYIDLYVTIESNDIMHNVIIPPKSFLLVQNDQYVKSEQIIAEIRAGTYTLNLKEKVRKHIFSDSEGEMHWSTNIYHVSEFAYSNVHILPKTSHLWILSGNSHKSDTVSLSLLKDQDQMSTHSLPTAKRNTSNFLVSNNQVRLCPDHCHFMHPTISPDTSNLLAKKRRNRFIIPFLFRSIRERNNELMPDISVEIPIDGIIHKNSILAYFDDPQYRTQSSGIAKYKTIGIHSIFQKEDLIEYRGIREFKPKYQIKVDRFFFIPQEVHILSESSSIMVRNNSIIGVNTPITLNKKSRVGGLVRVEKNKKKIELKIFSGDIHFPGEIDKISQHSAILIPPEMVKKKNSKESKKKTNWRYIQWITTTKKKYFVLVRPVILYDIADSINLVKLFPQDLFKEWDNLELKVLNFILYGNGKSIRGILDTSIQLVRTCLVLNWNEDEKSSSIEEALASFVEVSTNGLIRYFLRIDLVKSHISYIRKRNDPSSSGLISYNESDRININPFFSIYKENIQQSLSQKHGTIRMLLNRNKENRSFIILSSSNCFQMGPFNNVKYHNGIKEEINQFKRNHKIPIKISLGPLGVAPQIANFFSFYHLITHNKISSIKKNLQLNKFKETFQVIKYYLMDENERIYKPDLYNNIILNPFHLNWDFIHPNYCEKTFPIISLGQFICENVCIVQTKNGPNLKSGQVITVQMDFVGIRLANPYLATPGATIHGHYGEMLYEGDILVTFIYEKSRSGDITQGLPKVEQVLEVRSIDSISMNLEKRIDAWNERITGILGIPWRFLIGAELTIAQSRISLVNKIQRVYRSQGVHIHNRHIEIIVRQITSKVLVSEDGMSNVFSPGELIGLLRAQRTGRALEESICYRTLLLGITKTSLNTQSFISEASFQETARVLAKAALRGRIDWLKGLKENLVLGGIIPVGTGFKKIGDRSSARQDTKITLETIKIIRGRN.

Zn(2+) is bound by residues C220, C291, C298, and C301.

It belongs to the RNA polymerase beta' chain family. RpoC2 subfamily. In terms of assembly, in plastids the minimal PEP RNA polymerase catalytic core is composed of four subunits: alpha, beta, beta', and beta''. When a (nuclear-encoded) sigma factor is associated with the core the holoenzyme is formed, which can initiate transcription. Requires Zn(2+) as cofactor.

Its subcellular location is the plastid. The protein resides in the chloroplast. It carries out the reaction RNA(n) + a ribonucleoside 5'-triphosphate = RNA(n+1) + diphosphate. In terms of biological role, DNA-dependent RNA polymerase catalyzes the transcription of DNA into RNA using the four ribonucleoside triphosphates as substrates. This Lotus japonicus (Lotus corniculatus var. japonicus) protein is DNA-directed RNA polymerase subunit beta''.